The primary structure comprises 610 residues: Dapper homolog 3 (610 aa).

Position 6 is a phosphoserine (Ser-6). Disordered stretches follow at residues 50-76 (PGMG…RRAA), 102-179 (LESG…SVGA), and 200-579 (TCSS…PAGP). The span at 56–69 (EAEDEEDAEEDEDA) shows a compositional bias: acidic residues. Residues 63-87 (AEEDEDAAAARRAAAALEEQLEALP) are a coiled coil. Low complexity predominate over residues 120–138 (DPSSTGGPDSPPSTFCGDS). Phosphoserine occurs at positions 165 and 237. Arg-255 carries the omega-N-methylarginine modification. Positions 317–331 (PPEPAPPAAASPPSS) are enriched in pro residues. Over residues 344–356 (PGAPAASRGLPGR) the composition is skewed to low complexity. 2 positions are modified to phosphoserine: Ser-409 and Ser-456. Pro residues predominate over residues 475–485 (PRGPAPSPSAP). Over residues 524-545 (ESESSASEGESPAFSSASSDSD) the composition is skewed to low complexity. Over residues 566 to 576 (GPGGAAGGGTP) the composition is skewed to gly residues. A PDZ-binding motif is present at residues 607-610 (MTTV).

Belongs to the dapper family. In terms of assembly, can form homodimers and heterodimers with DACT1 or DACT3. Interacts with CSNK1D, PKA catalytic subunit, PKC-type kinase, DVL1, DVL2, DVL3, VANGL1, VANGL2 and CTNND1. Expressed in brain and uterus.

Functionally, may be involved in regulation of intracellular signaling pathways during development. Specifically thought to play a role in canonical and/or non-canonical Wnt signaling pathways through interaction with DSH (Dishevelled) family proteins. This chain is Dapper homolog 3 (Dact3), found in Mus musculus (Mouse).